Reading from the N-terminus, the 569-residue chain is Potassium-transporting ATPase potassium-binding subunit (569 aa).

Helical transmembrane passes span 3 to 23, 64 to 84, 133 to 153, 179 to 199, 255 to 275, 281 to 301, 375 to 395, 421 to 441, 497 to 517, and 535 to 555; these read TEIL…YPLG, FLKS…ILLV, FVIM…MAGI, ILFP…TPMG, IVEC…LGFY, LGYV…FCNV, FGGV…AVFI, IVSL…SYVW, LALI…AGLL, and VTFG…SFFP.

The protein belongs to the KdpA family. The system is composed of three essential subunits: KdpA, KdpB and KdpC.

Its subcellular location is the cell inner membrane. In terms of biological role, part of the high-affinity ATP-driven potassium transport (or Kdp) system, which catalyzes the hydrolysis of ATP coupled with the electrogenic transport of potassium into the cytoplasm. This subunit binds the periplasmic potassium ions and delivers the ions to the membrane domain of KdpB through an intramembrane tunnel. The polypeptide is Potassium-transporting ATPase potassium-binding subunit (Parabacteroides distasonis (strain ATCC 8503 / DSM 20701 / CIP 104284 / JCM 5825 / NCTC 11152)).